We begin with the raw amino-acid sequence, 64 residues long: Large ribosomal subunit protein bL35 (64 aa).

This sequence belongs to the bacterial ribosomal protein bL35 family.

The polypeptide is Large ribosomal subunit protein bL35 (Vibrio vulnificus (strain CMCP6)).